Consider the following 552-residue polypeptide: U3 small nucleolar RNA-associated protein 18 homolog (552 aa).

Disordered stretches follow at residues 1-81 (MPPE…KPAA) and 104-143 (LRSSRGQLHGSSDESEVENEAKDIFSQKKKQPVWVDEDDE). Over residues 43–58 (PAEPRAAPSAGSAAAA) the composition is skewed to low complexity. Positions 72-81 (LTLEDDKPAA) are enriched in basic and acidic residues. A Glycyl lysine isopeptide (Lys-Gly) (interchain with G-Cter in SUMO2) cross-link involves residue lysine 78. Residues serine 114, serine 115, and serine 118 each carry the phosphoserine modification. Glycyl lysine isopeptide (Lys-Gly) (interchain with G-Cter in SUMO2) cross-links involve residues lysine 178 and lysine 197. Positions 183–214 (HAMGGVPDWAEAGSKRRTSSDDESEEDEDDLL) are disordered. Threonine 200 is subject to Phosphothreonine. Serine 201, serine 202, and serine 206 each carry phosphoserine. Residues 203 to 212 (DDESEEDEDD) show a composition bias toward acidic residues. Residue threonine 217 is modified to Phosphothreonine. WD repeat units follow at residues 245-284 (PTTARISSVQFHPGAQVVMVSGVDNAISLFQVDGKTNPKI), 289-329 (LEKF…LIPV), 376-415 (KINGRIAASTFSSDSKRIYTYSENGEVYVWDVNSRKCMNR), 417-458 (LDEG…QQTN), and 467-508 (NLVT…VFSN). Lysine 513 is covalently cross-linked (Glycyl lysine isopeptide (Lys-Gly) (interchain with G-Cter in SUMO2)). One copy of the WD 6 repeat lies at 515–551 (STLSRVQTMDFSPRGGYFALGNEKGRALMYRLHHYSD).

It belongs to the WD repeat UTP18 family. As to quaternary structure, part of the small subunit (SSU) processome, composed of more than 70 proteins and the RNA chaperone small nucleolar RNA (snoRNA) U3.

It localises to the nucleus. It is found in the nucleolus. Functionally, part of the small subunit (SSU) processome, first precursor of the small eukaryotic ribosomal subunit. During the assembly of the SSU processome in the nucleolus, many ribosome biogenesis factors, an RNA chaperone and ribosomal proteins associate with the nascent pre-rRNA and work in concert to generate RNA folding, modifications, rearrangements and cleavage as well as targeted degradation of pre-ribosomal RNA by the RNA exosome. Involved in nucleolar processing of pre-18S ribosomal RNA. This chain is U3 small nucleolar RNA-associated protein 18 homolog (Utp18), found in Mus musculus (Mouse).